The sequence spans 175 residues: Protein FanH (175 aa).

Positions 1–20 are cleaved as a signal peptide; that stretch reads MIKKVPVLLFFMASISITHA. A disulfide bridge links C39 with C77.

The protein localises to the fimbrium. In terms of biological role, involved in the biosynthesis of K99 fimbriae. The chain is Protein FanH (fanH) from Escherichia coli.